We begin with the raw amino-acid sequence, 364 residues long: DNA polymerase IV (364 aa).

In terms of domain architecture, UmuC spans 14–198 (IIHIDMDAFF…LPIEKFHGVG (185 aa)). Mg(2+) contacts are provided by D18 and D116. E117 is an active-site residue.

Belongs to the DNA polymerase type-Y family. Monomer. Mg(2+) serves as cofactor.

The protein localises to the cytoplasm. The catalysed reaction is DNA(n) + a 2'-deoxyribonucleoside 5'-triphosphate = DNA(n+1) + diphosphate. Functionally, poorly processive, error-prone DNA polymerase involved in untargeted mutagenesis. Copies undamaged DNA at stalled replication forks, which arise in vivo from mismatched or misaligned primer ends. These misaligned primers can be extended by PolIV. Exhibits no 3'-5' exonuclease (proofreading) activity. May be involved in translesional synthesis, in conjunction with the beta clamp from PolIII. The chain is DNA polymerase IV from Streptococcus agalactiae serotype Ia (strain ATCC 27591 / A909 / CDC SS700).